The primary structure comprises 307 residues: Transcription initiation factor IIB (307 aa).

The segment at 11–42 adopts a TFIIB-type zinc-finger fold; it reads FTEECPACGSAEIVFDEERGEYVCANCGLVTE. Residues Cys-15, Cys-18, Cys-34, and Cys-37 each coordinate Zn(2+). Positions 48–69 are disordered; sequence PGPEWRHFNPDQRQRRSRTGEP. Over residues 50–69 the composition is skewed to basic and acidic residues; that stretch reads PEWRHFNPDQRQRRSRTGEP. Repeat copies occupy residues 123 to 207 and 218 to 299.

This sequence belongs to the TFIIB family.

Its function is as follows. Stabilizes TBP binding to an archaeal box-A promoter. Also responsible for recruiting RNA polymerase II to the pre-initiation complex (DNA-TBP-TFIIB). This Methanopyrus kandleri (strain AV19 / DSM 6324 / JCM 9639 / NBRC 100938) protein is Transcription initiation factor IIB.